The following is a 234-amino-acid chain: Endo-1,4-beta-xylanase 1 (234 aa).

An N-terminal signal peptide occupies residues 1–21 (MVSFIFTRIILFAAAINGAVA). N-linked (GlcNAc...) asparagine glycans are attached at residues Asn25 and Asn75. Residues 38-234 (SGTPSSTGYS…SSGFSSITVA (197 aa)) enclose the GH11 domain. Residue Glu124 is the Nucleophile of the active site. A glycan (N-linked (GlcNAc...) asparagine) is linked at Asn167. Glu221 serves as the catalytic Proton donor.

This sequence belongs to the glycosyl hydrolase 11 (cellulase G) family.

Its subcellular location is the secreted. It catalyses the reaction Endohydrolysis of (1-&gt;4)-beta-D-xylosidic linkages in xylans.. The protein operates within glycan degradation; xylan degradation. Its function is as follows. Endo-1,4-beta-xylanase involved in the hydrolysis of xylan, a major structural heterogeneous polysaccharide found in plant biomass representing the second most abundant polysaccharide in the biosphere, after cellulose. In Leucoagaricus gongylophorus (Leaf-cutting ant fungus), this protein is Endo-1,4-beta-xylanase 1 (Xyn1).